Here is a 1960-residue protein sequence, read N- to C-terminus: Transcription factor 20 (1960 aa).

The segment covering 1–18 has biased composition (polar residues); that stretch reads MQSFREQSSYHGNQQSYP. The tract at residues 1–287 is disordered; the sequence is MQSFREQSSY…GSNAQAYGTQ (287 aa). The span at 42–60 shows a compositional bias: gly residues; it reads GGTGGSSGSSGSGSGGGRR. At Arg-60 the chain carries Omega-N-methylarginine. Low complexity predominate over residues 61 to 75; it reads GAAAAAAAMASETSG. Residues 122 to 131 show a composition bias toward polar residues; that stretch reads QGSSFGNQYG. Low complexity predominate over residues 164-192; it reads SAQYQQQASSQQQQQQVQQLRQQLYQSHQ. A compositionally biased stretch (polar residues) spans 193–219; the sequence is PLPQATGQPASSSSHLQPMQRPSTLPS. The span at 236-259 shows a compositional bias: low complexity; that stretch reads QSSASSSSSSSFPSPQRFSQSGQS. 2 stretches are compositionally biased toward polar residues: residues 260 to 270 and 277 to 287; these read YDGSYNVNAGS and VGSNAQAYGTQ. A Glycyl lysine isopeptide (Lys-Gly) (interchain with G-Cter in SUMO2) cross-link involves residue Lys-304. 2 disordered regions span residues 305–328 and 360–392; these read IPQGTQQGQQQQQPQQQQHPSQHV and FHQNFSPISNPSPAASVVQSPSCSSTPSPLMQT. Low complexity-rich tracts occupy residues 306–322 and 368–388; these read PQGTQQGQQQQQPQQQQ and SNPSPAASVVQSPSCSSTPSP. A phosphoserine mark is found at Ser-419 and Ser-430. The tract at residues 476-748 is disordered; the sequence is SDALTPQKKT…HGERKGRNEK (273 aa). Polar residues-rich tracts occupy residues 497 to 508 and 537 to 547; these read SCTNSEGSSQPE and LSGQSTSSDTT. Phosphoserine is present on residues Ser-538, Ser-559, Ser-574, and Ser-583. Position 602 is an N6-acetyllysine (Lys-602). The span at 616–628 shows a compositional bias: basic and acidic residues; the sequence is RVEKPGGQDKGSQ. Phosphoserine is present on Ser-640. Residues 665–677 show a composition bias toward low complexity; it reads GNKNGDNNSNHNG. Residues 693-702 show a composition bias toward polar residues; that stretch reads TSRTEPSKSP. Residues Lys-710, Lys-733, Lys-748, Lys-823, Lys-832, and Lys-844 each participate in a glycyl lysine isopeptide (Lys-Gly) (interchain with G-Cter in SUMO2) cross-link. Over residues 732-748 the composition is skewed to basic and acidic residues; that stretch reads EKGDFTGHGERKGRNEK. Ser-871 is modified (phosphoserine). Glycyl lysine isopeptide (Lys-Gly) (interchain with G-Cter in SUMO2) cross-links involve residues Lys-920 and Lys-922. Residues 920-1037 form a disordered region; the sequence is KLKSQSGQIK…GDPHHMNPHM (118 aa). Residue Lys-929 forms a Glycyl lysine isopeptide (Lys-Gly) (interchain with G-Cter in SUMO1); alternate linkage. A Glycyl lysine isopeptide (Lys-Gly) (interchain with G-Cter in SUMO2); alternate cross-link involves residue Lys-929. Over residues 936-945 the composition is skewed to polar residues; sequence SKSQASFNNK. A compositionally biased stretch (basic and acidic residues) spans 946-961; sequence KSGDHCHPPSIKHESY. Residue Lys-957 forms a Glycyl lysine isopeptide (Lys-Gly) (interchain with G-Cter in SUMO2) linkage. Residues Ser-966 and Ser-1005 each carry the phosphoserine modification. A Glycyl lysine isopeptide (Lys-Gly) (interchain with G-Cter in SUMO2) cross-link involves residue Lys-1015. Residue Arg-1024 is modified to Omega-N-methylarginine. At Ser-1053 the chain carries Phosphoserine. Glycyl lysine isopeptide (Lys-Gly) (interchain with G-Cter in SUMO2) cross-links involve residues Lys-1086, Lys-1098, Lys-1137, Lys-1173, Lys-1178, Lys-1183, Lys-1210, Lys-1231, Lys-1267, and Lys-1274. 3 disordered regions span residues 1110–1142, 1162–1285, and 1303–1331; these read AAAQHRQEGPRKSPRQQQFLDRVRSPLKNDKDG, RCLM…GRLL, and SHSQDIKSIPKRDSSKDLPSPDSRNCPAV. The span at 1130-1142 shows a compositional bias: basic and acidic residues; it reads DRVRSPLKNDKDG. The segment at 1170 to 1191 is leucine-zipper; that stretch reads LPNKGMELKHGSQKLQESCWDL. A Nuclear localization signal motif is present at residues 1254–1268; that stretch reads RRRVRSFISPIPSKR. Over residues 1304-1318 the composition is skewed to basic and acidic residues; the sequence is HSQDIKSIPKRDSSK. Position 1305 is a phosphoserine (Ser-1305). Residue Lys-1309 forms a Glycyl lysine isopeptide (Lys-Gly) (interchain with G-Cter in SUMO2) linkage. The residue at position 1335 (Ser-1335) is a Phosphoserine. Lys-1338 is covalently cross-linked (Glycyl lysine isopeptide (Lys-Gly) (interchain with G-Cter in SUMO2)). Phosphoserine is present on Ser-1361. The interval 1384–1607 is disordered; that stretch reads DILSLKSGPP…TKQAVPIVEP (224 aa). Glycyl lysine isopeptide (Lys-Gly) (interchain with G-Cter in SUMO2) cross-links involve residues Lys-1389, Lys-1409, Lys-1428, and Lys-1446. Over residues 1424–1451 the composition is skewed to basic and acidic residues; that stretch reads LHVEKPLPRSSEEWRGSVDDKVKTETHA. Residues 1464–1477 are compositionally biased toward polar residues; sequence MTSTTSQKPGSNQG. Lys-1510 is covalently cross-linked (Glycyl lysine isopeptide (Lys-Gly) (interchain with G-Cter in SUMO2)). At Ser-1522 the chain carries Phosphoserine. Residue Lys-1524 forms a Glycyl lysine isopeptide (Lys-Gly) (interchain with G-Cter in SUMO2) linkage. The a.T hook DNA-binding region spans 1537–1551; that stretch reads GKKKGRPIGSVNKQK. Residues 1555–1566 are compositionally biased toward pro residues; that stretch reads QPPPPPPQPPQI. The Nuclear localization signal motif lies at 1576–1600; that stretch reads KPKKQRQRRERRKPGAQPRKRKTKQ. Basic residues predominate over residues 1578–1599; that stretch reads KKQRQRRERRKPGAQPRKRKTK. Lys-1613 is covalently cross-linked (Glycyl lysine isopeptide (Lys-Gly) (interchain with G-Cter in SUMO2)). Disordered stretches follow at residues 1660 to 1683 and 1732 to 1839; these read LVRGRKGQRSLTPPPSSTESKALP and TLPK…PELE. The residue at position 1669 (Ser-1669) is a Phosphoserine. Phosphothreonine occurs at positions 1671, 1762, and 1764. Positions 1785–1792 match the Nuclear localization signal motif; it reads RFKRRHRS. The C2HC pre-PHD-type; degenerate zinc finger occupies 1829 to 1865; sequence PTTSEGGPELELQIPELPLDSNEFWVHEGCILWANGI. The PHD-type zinc-finger motif lies at 1885-1933; sequence MKCSHCQEAGATLGCYNKGCSFRYHYPCAIDADCLLHEENFSVRCPKHK. The segment at 1939–1960 is disordered; sequence PLPPLQNKTAKGSLSTEQSERG. Positions 1944 to 1960 are enriched in polar residues; it reads QNKTAKGSLSTEQSERG.

As to quaternary structure, homodimer. Interacts with RNF4 and JUN. In terms of tissue distribution, expressed in most tissues, except in ovary and prostate. Isoform 1 is exclusively expressed in brain, heart and testis, and this form predominates in liver and kidney. Isoform 2 predominates in lung.

The protein localises to the nucleus. Functionally, transcriptional activator that binds to the regulatory region of MMP3 and thereby controls stromelysin expression. It stimulates the activity of various transcriptional activators such as JUN, SP1, PAX6 and ETS1, suggesting a function as a coactivator. The chain is Transcription factor 20 (TCF20) from Homo sapiens (Human).